The following is a 140-amino-acid chain: uncharacterized protein (140 aa).

The next 2 helical transmembrane spans lie at 63 to 83 (LGFV…TLAT) and 119 to 139 (ILLY…IFIN).

The protein resides in the membrane. This is an uncharacterized protein from Schizosaccharomyces pombe (strain 972 / ATCC 24843) (Fission yeast).